Here is a 166-residue protein sequence, read N- to C-terminus: Protein YciF (166 aa).

As to quaternary structure, homodimer.

The sequence is that of Protein YciF (yciF) from Escherichia coli (strain K12).